The chain runs to 44 residues: DNA-directed RNA polymerase subunit Rpo12 (44 aa).

Zn(2+) contacts are provided by C8, C22, and C25.

The protein belongs to the archaeal Rpo12/eukaryotic RPC10 RNA polymerase subunit family. In terms of assembly, part of the RNA polymerase complex. It depends on Zn(2+) as a cofactor.

It is found in the cytoplasm. It carries out the reaction RNA(n) + a ribonucleoside 5'-triphosphate = RNA(n+1) + diphosphate. In terms of biological role, DNA-dependent RNA polymerase (RNAP) catalyzes the transcription of DNA into RNA using the four ribonucleoside triphosphates as substrates. The sequence is that of DNA-directed RNA polymerase subunit Rpo12 from Natronomonas pharaonis (strain ATCC 35678 / DSM 2160 / CIP 103997 / JCM 8858 / NBRC 14720 / NCIMB 2260 / Gabara) (Halobacterium pharaonis).